Reading from the N-terminus, the 222-residue chain is Small ribosomal subunit protein uS7m (222 aa).

Residues 1-14 (MTTKLARFAQKRWI) constitute a mitochondrion transit peptide.

It belongs to the universal ribosomal protein uS7 family. As to quaternary structure, component of the mitochondrial ribosome small subunit (28S) which comprises a 12S rRNA and about 30 distinct proteins.

Its subcellular location is the mitochondrion. The polypeptide is Small ribosomal subunit protein uS7m (mrps-7) (Caenorhabditis elegans).